The chain runs to 557 residues: MDGIVPDIAVGTKRGSDELFSTCVTNGPFIMSSNSASAANGNDSKKFKGDSRSAGVPSRVIHIRKLPIDVTEGEVISLGLPFGKVTNLLMLKGKNQAFIEMNTEEAANTMVNYYTSVTPVLRGQPIYIQFSNHKELKTDSSPNQARAQAALQAVNSVQSGNLALAASAAAVDAGMAMAGQSPVLRIIVENLFYPVTLDVLHQIFSKFGTVLKIITFTKNNQFQALLQYADPVSAQHAKLSLDGQNIYNACCTLRIDFSKLTSLNVKYNNDKSRDYTRPDLPSGDSQPSLDQTMAAAFGAPGIISASPYAGAGFPPTFAIPQAAGLSVPNVHGALAPLAIPSAAAAAAAAGRIAIPGLAGAGNSVLLVSNLNPERVTPQSLFILFGVYGDVQRVKILFNKKENALVQMADGNQAQLAMSHLNGHKLHGKPIRITLSKHQNVQLPREGQEDQGLTKDYGNSPLHRFKKPGSKNFQNIFPPSATLHLSNIPPSVSEEDLKVLFSSNGGVVKGFKFFQKDRKMALIQMGSVEEAVQALIDLHNHDLGENHHLRVSFSKSTI.

Met-1 is subject to N-acetylmethionine. The residue at position 16 (Ser-16) is a Phosphoserine. RRM domains lie at 59–143 (RVIH…SSPN), 184–260 (LRII…FSKL), and 363–437 (SVLL…LSKH). Lys-65 is covalently cross-linked (Glycyl lysine isopeptide (Lys-Gly) (interchain with G-Cter in SUMO2)). At Tyr-127 the chain carries Phosphotyrosine. The residue at position 138 (Thr-138) is a Phosphothreonine. A Phosphoserine modification is found at Ser-141. Residue Lys-218 forms a Glycyl lysine isopeptide (Lys-Gly) (interchain with G-Cter in SUMO2) linkage. Position 459 is a phosphoserine (Ser-459). One can recognise an RRM 4 domain in the interval 480-555 (ATLHLSNIPP…HHLRVSFSKS (76 aa)).

In terms of assembly, monomer. Part of a ternary complex containing KHSRP, PTBP1, PTBP2 and HNRPH1. Interacts with RAVER1 and SFPQ. Interacts with IVNS1ABP (via BACK domain); the interaction is direct.

Its subcellular location is the nucleus. Plays a role in pre-mRNA splicing and in the regulation of alternative splicing events. Activates exon skipping of its own pre-mRNA during muscle cell differentiation. Binds to the polypyrimidine tract of introns. May promote RNA looping when bound to two separate polypyrimidine tracts in the same pre-mRNA. May promote the binding of U2 snRNP to pre-mRNA. Cooperates with RAVER1 to modulate switching between mutually exclusive exons during maturation of the TPM1 pre-mRNA. Represses the splicing of MAPT/Tau exon 10. Binds to polypyrimidine-rich controlling element (PCE) of CFTR and promotes exon skipping of CFTR exon 9, thereby antagonizing TIA1 and its role in exon inclusion of CFTR exon 9. Plays a role in the splicing of pyruvate kinase PKM by binding repressively to a polypyrimidine tract flanking PKM exon 9, inhibiting exon 9 inclusion and resulting in exon 10 inclusion and production of the PKM M2 isoform. In case of infection by picornaviruses, binds to the viral internal ribosome entry site (IRES) and stimulates the IRES-mediated translation. The sequence is that of Polypyrimidine tract-binding protein 1 (PTBP1) from Homo sapiens (Human).